Here is a 261-residue protein sequence, read N- to C-terminus: Precorrin-6A reductase (261 aa).

Belongs to the precorrin-6x reductase family.

The enzyme catalyses precorrin-6B + NADP(+) = precorrin-6A + NADPH + 2 H(+). It functions in the pathway cofactor biosynthesis; adenosylcobalamin biosynthesis; cob(II)yrinate a,c-diamide from precorrin-2 (aerobic route): step 6/10. In terms of biological role, catalyzes the reduction of the macrocycle of precorrin-6X into precorrin-6Y. This is Precorrin-6A reductase (cobK) from Sinorhizobium sp.